Consider the following 963-residue polypeptide: Phosphofurin acidic cluster sorting protein 1 (963 aa).

Residues 1–22 (MAERGGAGGGPGGAGGGSGQRG) are compositionally biased toward gly residues. Disordered regions lie at residues 1–72 (MAER…SSST) and 78–97 (VAVA…RTPA). Ala-2 carries the post-translational modification N-acetylalanine. Ser-28 is modified (phosphoserine). Thr-46 bears the Phosphothreonine mark. Residues 53 to 72 (ATSSSSSTSAAAASSSSSST) are compositionally biased toward low complexity. The segment at 168–175 (ETELQLTF) is involved in binding to AP-1. Tyr-251 is subject to Phosphotyrosine. A compositionally biased stretch (basic and acidic residues) spans 262 to 273 (GIKSKLSDRSPD). Disordered stretches follow at residues 262 to 299 (GIKS…LHGQ) and 377 to 428 (NPSD…GKDT). Positions 276–293 (NYSEEEEESFSSEQEGSD) are enriched in acidic residues. Residues 353-377 (HVSREQIREVEEDLDELYDSLEMYN) are a coiled coil. 2 positions are modified to phosphoserine: Ser-379 and Ser-381. Residues 406–428 (MSQSSSQTEIGSLNSKGSLGKDT) show a composition bias toward polar residues. Ser-430 and Ser-495 each carry phosphoserine. Disordered regions lie at residues 476–542 (PEKV…HSTQ) and 760–804 (SPST…SMSS). A compositionally biased stretch (polar residues) spans 483–496 (MKSSKTDLQGSASP). Thr-504 is subject to Phosphothreonine. A phosphoserine mark is found at Ser-519, Ser-528, Ser-529, Ser-531, and Ser-534. Residues 770–804 (SPVVSLTVPSTSPPSSSGLSRDATATPPSSPSMSS) show a composition bias toward low complexity.

The protein belongs to the PACS family. In terms of assembly, associates with AP-1 and AP-3 but not with AP-2 complexes. Interacts with FURIN. Forms a ternary complex with FURIN and AP-1. Interacts with NPHP1; the interaction is dependent of NPHP1 phosphorylation by CK2. Interacts with PKD2 (via acidic region). Interacts with SORL1. Interacts with WDR37. (Microbial infection) Interacts with HIV-1 Nef. As to quaternary structure, (Microbial infection) Interacts with Epstein-barr virus protein BBLF1.

The protein resides in the golgi apparatus. It is found in the trans-Golgi network. Coat protein that is involved in the localization of trans-Golgi network (TGN) membrane proteins that contain acidic cluster sorting motifs. Controls the endosome-to-Golgi trafficking of furin and mannose-6-phosphate receptor by connecting the acidic-cluster-containing cytoplasmic domain of these molecules with the adapter-protein complex-1 (AP-1) of endosomal clathrin-coated membrane pits. Involved in HIV-1 nef-mediated removal of MHC-I from the cell surface to the TGN. Required for normal ER Ca2+ handling in lymphocytes. Together with WDR37, it plays an essential role in lymphocyte development, quiescence and survival. Required for stabilizing peripheral lymphocyte populations. The sequence is that of Phosphofurin acidic cluster sorting protein 1 (PACS1) from Homo sapiens (Human).